The chain runs to 247 residues: Cell division protein ZapD (247 aa).

This sequence belongs to the ZapD family. Interacts with FtsZ.

The protein localises to the cytoplasm. In terms of biological role, cell division factor that enhances FtsZ-ring assembly. Directly interacts with FtsZ and promotes bundling of FtsZ protofilaments, with a reduction in FtsZ GTPase activity. The protein is Cell division protein ZapD of Salmonella arizonae (strain ATCC BAA-731 / CDC346-86 / RSK2980).